The chain runs to 494 residues: Zinc metalloproteinase/disintegrin (494 aa).

Positions Met-1–Ser-20 are cleaved as a signal peptide. Positions Lys-21–Ser-193 are excised as a propeptide. Residues Arg-201–Ala-396 form the Peptidase M12B domain. Intrachain disulfides connect Cys-311-Cys-391, Cys-351-Cys-375, and Cys-353-Cys-358. His-336 is a binding site for Zn(2+). Glu-337 is a catalytic residue. Zn(2+) contacts are provided by His-340 and His-346. Positions Glu-410 to Glu-431 are excised as a propeptide. The 62-residue stretch at Asn-417 to Glu-478 folds into the Disintegrin domain. 4 cysteine pairs are disulfide-bonded: Cys-433–Cys-442, Cys-438–Cys-463, Cys-439–Cys-468, and Cys-451–Cys-470. The short motif at Arg-455–Asp-457 is the Cell attachment site element. The propeptide occupies Met-482–Met-494.

This sequence belongs to the venom metalloproteinase (M12B) family. P-II subfamily. P-IIa sub-subfamily. Monomer (disintegrin). Expressed by the venom gland.

Its subcellular location is the secreted. Its function is as follows. Impairs hemostasis in the envenomed animal. Inhibits ADP-induced platelet aggregation (IC(50)=168 nM). Inhibits alpha-5/beta-1 (ITGA5/ITGB1) integrin and induces the expression of a ligand-induced binding site epitope on beta-1 integrin subunit. Has a direct chemotactic stimulus on human neutrophils in vitro. This chain is Zinc metalloproteinase/disintegrin, found in Echis ocellatus (Ocellated saw-scaled viper).